The following is a 163-amino-acid chain: NADH-quinone oxidoreductase subunit I 1 (163 aa).

2 4Fe-4S ferredoxin-type domains span residues 53-83 and 94-123; these read LRRY…IEAG and VRYD…EGPN. Residues C63, C66, C69, C73, C103, C106, C109, and C113 each contribute to the [4Fe-4S] cluster site.

This sequence belongs to the complex I 23 kDa subunit family. In terms of assembly, NDH-1 is composed of 14 different subunits. Subunits NuoA, H, J, K, L, M, N constitute the membrane sector of the complex. The cofactor is [4Fe-4S] cluster.

The protein localises to the cell inner membrane. The catalysed reaction is a quinone + NADH + 5 H(+)(in) = a quinol + NAD(+) + 4 H(+)(out). NDH-1 shuttles electrons from NADH, via FMN and iron-sulfur (Fe-S) centers, to quinones in the respiratory chain. The immediate electron acceptor for the enzyme in this species is believed to be ubiquinone. Couples the redox reaction to proton translocation (for every two electrons transferred, four hydrogen ions are translocated across the cytoplasmic membrane), and thus conserves the redox energy in a proton gradient. The protein is NADH-quinone oxidoreductase subunit I 1 of Rhizobium etli (strain ATCC 51251 / DSM 11541 / JCM 21823 / NBRC 15573 / CFN 42).